We begin with the raw amino-acid sequence, 77 residues long: Probable Vpr-like protein (77 aa).

The Nuclear export signal motif lies at Leu34–Leu42. The Nuclear localization signal signature appears at Arg44–Lys53.

It is found in the virion. Its subcellular location is the host nucleus. In terms of biological role, seems to function as a Vpr-like protein, since it mediates host cell cycle arrest in G2 phase. Cell cycle arrest creates a favorable environment for maximizing viral expression and production. This Felidae (cat family) protein is Probable Vpr-like protein.